The sequence spans 80 residues: Caltrin (80 aa).

The N-terminal stretch at 1-32 (MMAGRRSWPAMATVLLALLVCLGELVDSKPQP) is a signal peptide.

In terms of biological role, inhibits calcium transport into spermatozoa; it does not bind directly to calcium. Binds to calmodulin. Inhibits the growth of microorganisms. Seem to act as an antibiotic by permeabilizing the bacterial membrane. This is Caltrin (PYY2) from Bos taurus (Bovine).